A 185-amino-acid chain; its full sequence is Ribosome-recycling factor (185 aa).

The protein belongs to the RRF family.

Its subcellular location is the cytoplasm. Functionally, responsible for the release of ribosomes from messenger RNA at the termination of protein biosynthesis. May increase the efficiency of translation by recycling ribosomes from one round of translation to another. The protein is Ribosome-recycling factor of Wigglesworthia glossinidia brevipalpis.